The primary structure comprises 292 residues: Shikimate dehydrogenase (NADP(+)) (292 aa).

Residues 25 to 27 (SKS) and T72 contribute to the shikimate site. The active-site Proton acceptor is K76. Shikimate-binding residues include N97 and D113. Residues 137–141 (GAGGA), 161–166 (NRTQSK), and M230 contribute to the NADP(+) site. Residue Y232 participates in shikimate binding. Residue G254 coordinates NADP(+).

It belongs to the shikimate dehydrogenase family. As to quaternary structure, homodimer.

It catalyses the reaction shikimate + NADP(+) = 3-dehydroshikimate + NADPH + H(+). It participates in metabolic intermediate biosynthesis; chorismate biosynthesis; chorismate from D-erythrose 4-phosphate and phosphoenolpyruvate: step 4/7. Involved in the biosynthesis of the chorismate, which leads to the biosynthesis of aromatic amino acids. Catalyzes the reversible NADPH linked reduction of 3-dehydroshikimate (DHSA) to yield shikimate (SA). The sequence is that of Shikimate dehydrogenase (NADP(+)) from Shewanella sp. (strain MR-7).